The primary structure comprises 337 residues: Glyceraldehyde-3-phosphate dehydrogenase (337 aa).

NAD(+) is bound by residues 13 to 14 (RI), aspartate 35, and lysine 80. Residues 151–153 (SCT), threonine 182, 211–212 (TG), and arginine 234 each bind D-glyceraldehyde 3-phosphate. The active-site Nucleophile is the cysteine 152. Asparagine 316 contributes to the NAD(+) binding site.

This sequence belongs to the glyceraldehyde-3-phosphate dehydrogenase family. In terms of assembly, homotetramer.

The protein localises to the cytoplasm. The catalysed reaction is D-glyceraldehyde 3-phosphate + phosphate + NAD(+) = (2R)-3-phospho-glyceroyl phosphate + NADH + H(+). Its pathway is carbohydrate degradation; glycolysis; pyruvate from D-glyceraldehyde 3-phosphate: step 1/5. The sequence is that of Glyceraldehyde-3-phosphate dehydrogenase (GAPD) from Mycosarcoma maydis (Corn smut fungus).